Reading from the N-terminus, the 516-residue chain is uncharacterized protein (516 aa).

PFTB repeat units lie at residues 45 to 86 and 401 to 443; these read RQDA…QRAD and DERA…DGSE.

This is an uncharacterized protein from Sinorhizobium fredii (strain NBRC 101917 / NGR234).